The primary structure comprises 379 residues: uncharacterized protein (379 aa).

Disordered regions lie at residues 1–25 (MASD…EKGK), 128–158 (QGKT…IERT), and 355–379 (TEKT…QGDI). The segment covering 128–141 (QGKTTSATTSNSTI) has biased composition (polar residues).

This is an uncharacterized protein from Caenorhabditis elegans.